Reading from the N-terminus, the 957-residue chain is Leucine--tRNA ligase (957 aa).

The short motif at 66–77 is the 'HIGH' region element; that stretch reads PYPSGAGLHVGH. Positions 728–732 match the 'KMSKS' region motif; it reads KMGKS. Lysine 731 is an ATP binding site.

This sequence belongs to the class-I aminoacyl-tRNA synthetase family.

Its subcellular location is the cytoplasm. The catalysed reaction is tRNA(Leu) + L-leucine + ATP = L-leucyl-tRNA(Leu) + AMP + diphosphate. This Streptomyces griseus subsp. griseus (strain JCM 4626 / CBS 651.72 / NBRC 13350 / KCC S-0626 / ISP 5235) protein is Leucine--tRNA ligase.